Consider the following 196-residue polypeptide: 7-methyl-GTP pyrophosphatase (196 aa).

The Proton acceptor role is filled by D72.

The protein belongs to the Maf family. YceF subfamily. A divalent metal cation is required as a cofactor.

Its subcellular location is the cytoplasm. It catalyses the reaction N(7)-methyl-GTP + H2O = N(7)-methyl-GMP + diphosphate + H(+). In terms of biological role, nucleoside triphosphate pyrophosphatase that hydrolyzes 7-methyl-GTP (m(7)GTP). May have a dual role in cell division arrest and in preventing the incorporation of modified nucleotides into cellular nucleic acids. This Neisseria meningitidis serogroup A / serotype 4A (strain DSM 15465 / Z2491) protein is 7-methyl-GTP pyrophosphatase.